Reading from the N-terminus, the 520-residue chain is 2-isopropylmalate synthase (520 aa).

The Pyruvate carboxyltransferase domain maps to 5–267; sequence VIIFDTTLRD…HTNINHQEIY (263 aa). Mn(2+) contacts are provided by Asp-14, His-202, His-204, and Asn-238. Positions 392 to 520 are regulatory domain; it reads RLDYFSVQSG…RLQQNNQEMV (129 aa).

Belongs to the alpha-IPM synthase/homocitrate synthase family. LeuA type 1 subfamily. In terms of assembly, homodimer. Requires Mn(2+) as cofactor.

It is found in the cytoplasm. The catalysed reaction is 3-methyl-2-oxobutanoate + acetyl-CoA + H2O = (2S)-2-isopropylmalate + CoA + H(+). The protein operates within amino-acid biosynthesis; L-leucine biosynthesis; L-leucine from 3-methyl-2-oxobutanoate: step 1/4. Functionally, catalyzes the condensation of the acetyl group of acetyl-CoA with 3-methyl-2-oxobutanoate (2-ketoisovalerate) to form 3-carboxy-3-hydroxy-4-methylpentanoate (2-isopropylmalate). The chain is 2-isopropylmalate synthase from Yersinia pseudotuberculosis serotype O:1b (strain IP 31758).